Here is a 153-residue protein sequence, read N- to C-terminus: Histone H2B.4 (153 aa).

2 stretches are compositionally biased toward basic and acidic residues: residues Met-1–Ala-10 and Ala-20–Lys-54. The segment at Met-1 to Lys-60 is disordered. 2 positions are modified to N6-acetyllysine: Lys-41 and Lys-42. Lys-149 is covalently cross-linked (Glycyl lysine isopeptide (Lys-Gly) (interchain with G-Cter in ubiquitin)).

It belongs to the histone H2B family. As to quaternary structure, the nucleosome is a histone octamer containing two molecules each of H2A, H2B, H3 and H4 assembled in one H3-H4 heterotetramer and two H2A-H2B heterodimers. The octamer wraps approximately 147 bp of DNA. Post-translationally, the N-terminus is blocked. In terms of processing, can be acetylated to form H2BK33ac and H2BK34ac. Acetylated mainly on the ubiquitinated form. Monoubiquitinated to form H2BK143ub1; which is increased during the light period and may give a specific tag for epigenetic transcriptional activation.

The protein resides in the nucleus. It is found in the chromosome. Core component of nucleosome. Nucleosomes wrap and compact DNA into chromatin, limiting DNA accessibility to the cellular machineries which require DNA as a template. Histones thereby play a central role in transcription regulation, DNA repair, DNA replication and chromosomal stability. DNA accessibility is regulated via a complex set of post-translational modifications of histones, also called histone code, and nucleosome remodeling. In Chlamydomonas reinhardtii (Chlamydomonas smithii), this protein is Histone H2B.4.